A 700-amino-acid polypeptide reads, in one-letter code: uncharacterized protein (700 aa).

4 residues coordinate [4Fe-4S] cluster: Cys-307, Cys-310, Cys-314, and Cys-558.

Belongs to the AOR/FOR family. It depends on [4Fe-4S] cluster as a cofactor. Mo-molybdopterin is required as a cofactor. Requires tungstopterin as cofactor.

This is an uncharacterized protein from Escherichia coli (strain K12).